Here is a 223-residue protein sequence, read N- to C-terminus: Endonuclease NucS (223 aa).

Belongs to the NucS endonuclease family.

Its subcellular location is the cytoplasm. Its function is as follows. Cleaves both 3' and 5' ssDNA extremities of branched DNA structures. In Streptomyces griseus subsp. griseus (strain JCM 4626 / CBS 651.72 / NBRC 13350 / KCC S-0626 / ISP 5235), this protein is Endonuclease NucS.